We begin with the raw amino-acid sequence, 104 residues long: Large ribosomal subunit protein bL21 (104 aa).

It belongs to the bacterial ribosomal protein bL21 family. In terms of assembly, part of the 50S ribosomal subunit. Contacts protein L20.

This protein binds to 23S rRNA in the presence of protein L20. This chain is Large ribosomal subunit protein bL21, found in Clostridium botulinum (strain 657 / Type Ba4).